Reading from the N-terminus, the 115-residue chain is Large ribosomal subunit protein bL19 (115 aa).

Belongs to the bacterial ribosomal protein bL19 family.

Its function is as follows. This protein is located at the 30S-50S ribosomal subunit interface and may play a role in the structure and function of the aminoacyl-tRNA binding site. The protein is Large ribosomal subunit protein bL19 of Finegoldia magna (strain ATCC 29328 / DSM 20472 / WAL 2508) (Peptostreptococcus magnus).